Here is a 253-residue protein sequence, read N- to C-terminus: Low affinity immunoglobulin gamma Fc region receptor III-A (253 aa).

The signal sequence occupies residues 1–20; sequence MGQPLPPVALLLLVSASSRA. At 21–207 the chain is on the extracellular side; it reads ADVPKALVLL…ISSSVLPWHQ (187 aa). 2 consecutive Ig-like C2-type domains span residues 24 to 90 and 99 to 189; these read PKAL…YRCQ and PVQL…VTIT. Intrachain disulfides connect Cys47-Cys89 and Cys128-Cys172. 4 N-linked (GlcNAc...) asparagine glycosylation sites follow: Asn56, Asn63, Asn165, and Asn180. The helical transmembrane segment at 208–226 threads the bilayer; that stretch reads IAFCLVMGLLLAADTGLYF. At 227-253 the chain is on the cytoplasmic side; it reads SVQRDLRSSQRARKEHTLGWSLGSQDK.

In terms of assembly, forms a heterooligomeric complex with ITAM-containing signaling subunits FCER1G. Interacts (via transmembrane domain) with signaling subunits; this interaction is a prerequisite for receptor complex expression on the cell surface and intracellular signal transduction. Binds the Fc region of antigen-complexed IgG.

It is found in the cell membrane. Receptor for the invariable Fc fragment of immunoglobulin gamma (IgG). Optimally activated upon binding of clustered antigen-IgG complexes displayed on cell surfaces, triggers lysis of antibody-coated cells, a process known as antibody-dependent cellular cytotoxicity (ADCC). Does not bind free monomeric IgG, thus avoiding inappropriate effector cell activation in the absence of antigenic trigger. Mediates IgG effector functions on natural killer (NK) cells. Binds antigen-IgG complexes generated upon infection and triggers NK cell-dependent cytokine production and degranulation to limit viral load and propagation. Fc-binding subunit that associates with FCER1G adapter to form functional signaling complexes. Following the engagement of antigen-IgG complexes, triggers phosphorylation of immunoreceptor tyrosine-based activation motif (ITAM)-containing adapters with subsequent activation of phosphatidylinositol 3-kinase signaling and sustained elevation of intracellular calcium that ultimately drive NK cell activation. Mediates enhanced ADCC in response to afucosylated IgGs. This Oryctolagus cuniculus (Rabbit) protein is Low affinity immunoglobulin gamma Fc region receptor III-A.